A 637-amino-acid polypeptide reads, in one-letter code: 1-deoxy-D-xylulose-5-phosphate synthase (637 aa).

Residues His-82 and 123–125 contribute to the thiamine diphosphate site; that span reads GHA. Position 154 (Asp-154) interacts with Mg(2+). Thiamine diphosphate is bound by residues 155-156, Asn-183, Tyr-295, and Glu-378; that span reads GS. Residue Asn-183 participates in Mg(2+) binding.

It belongs to the transketolase family. DXPS subfamily. Homodimer. Mg(2+) is required as a cofactor. It depends on thiamine diphosphate as a cofactor.

The enzyme catalyses D-glyceraldehyde 3-phosphate + pyruvate + H(+) = 1-deoxy-D-xylulose 5-phosphate + CO2. Its pathway is metabolic intermediate biosynthesis; 1-deoxy-D-xylulose 5-phosphate biosynthesis; 1-deoxy-D-xylulose 5-phosphate from D-glyceraldehyde 3-phosphate and pyruvate: step 1/1. In terms of biological role, catalyzes the acyloin condensation reaction between C atoms 2 and 3 of pyruvate and glyceraldehyde 3-phosphate to yield 1-deoxy-D-xylulose-5-phosphate (DXP). This Lawsonia intracellularis (strain PHE/MN1-00) protein is 1-deoxy-D-xylulose-5-phosphate synthase.